A 152-amino-acid chain; its full sequence is Large ribosomal subunit protein bL9 (152 aa).

It belongs to the bacterial ribosomal protein bL9 family.

Functionally, binds to the 23S rRNA. This is Large ribosomal subunit protein bL9 from Trichormus variabilis (strain ATCC 29413 / PCC 7937) (Anabaena variabilis).